Consider the following 340-residue polypeptide: Extracellular matrix protein-binding protein emp (340 aa).

The signal sequence occupies residues 1-26 (MKKKLLVLTMSTLFATQIMNSNHAKA).

It is found in the cell surface. Adhesin that binds to the host cell extracellular matrix proteins fibronectin, fibrinogen, collagen, and vitronectin. This Staphylococcus aureus (strain MSSA476) protein is Extracellular matrix protein-binding protein emp (emp).